Consider the following 391-residue polypeptide: 3-ketoacyl-CoA thiolase (391 aa).

Cysteine 90 functions as the Acyl-thioester intermediate in the catalytic mechanism. Catalysis depends on proton acceptor residues histidine 347 and cysteine 377.

Belongs to the thiolase-like superfamily. Thiolase family.

The catalysed reaction is an acyl-CoA + acetyl-CoA = a 3-oxoacyl-CoA + CoA. It functions in the pathway lipid metabolism; fatty acid beta-oxidation. Involved in the degradation of long-chain fatty acids. The polypeptide is 3-ketoacyl-CoA thiolase (fadA) (Bacillus subtilis (strain 168)).